The chain runs to 168 residues: Cell division inhibitor SulA (168 aa).

The segment at 106–112 is ftsZ binding; that stretch reads ALLTGNY. The interval 161 to 168 is lon protease binding; the sequence is KIHSYLYH.

The protein belongs to the SulA family. In terms of assembly, interacts with FtsZ. Is rapidly cleaved and degraded by the Lon protease once DNA damage is repaired.

Functionally, component of the SOS system and an inhibitor of cell division. Accumulation of SulA causes rapid cessation of cell division and the appearance of long, non-septate filaments. In the presence of GTP, binds a polymerization-competent form of FtsZ in a 1:1 ratio, thus inhibiting FtsZ polymerization and therefore preventing it from participating in the assembly of the Z ring. This mechanism prevents the premature segregation of damaged DNA to daughter cells during cell division. The polypeptide is Cell division inhibitor SulA (Yersinia pestis bv. Antiqua (strain Antiqua)).